The sequence spans 160 residues: Transcription elongation factor GreA (160 aa).

A coiled-coil region spans residues 1–72 (MAEKTYPMTL…QISSLETKIR (72 aa)).

This sequence belongs to the GreA/GreB family.

In terms of biological role, necessary for efficient RNA polymerase transcription elongation past template-encoded arresting sites. The arresting sites in DNA have the property of trapping a certain fraction of elongating RNA polymerases that pass through, resulting in locked ternary complexes. Cleavage of the nascent transcript by cleavage factors such as GreA or GreB allows the resumption of elongation from the new 3'terminus. GreA releases sequences of 2 to 3 nucleotides. In Streptococcus pneumoniae (strain ATCC 700669 / Spain 23F-1), this protein is Transcription elongation factor GreA.